A 340-amino-acid polypeptide reads, in one-letter code: MHTDLDTDMDMDTETTALCPSGSRRASPPGTPTPEADATLLKKSEKLLAELDRSGLPSAPGAPRRRGSMPVPYKHQLRRAQAVDELDWPPQASSSGSSDSLGSGEAAPAQKDGIFKVMLVGESGVGKSTLAGTFGGLQGDSAHEPENPEDTYERRIMVDKEEVTLVVYDIWEQGDAGGWLRDHCLQTGDAFLIVFSVTDRRSFSKVPETLLRLRAGRPHHDLPVILVGNKSDLARSREVSLEEGRHLAGTLSCKHIETSAALHHNTRELFEGAVRQIRLRRGRNHAGGQRPDPGSPEGPAPPARRESLTKKAKRFLANLVPRNAKFFKQRSRSCHDLSVL.

Over residues 1–13 (MHTDLDTDMDMDT) the composition is skewed to acidic residues. Residues 1-107 (MHTDLDTDMD…SDSLGSGEAA (107 aa)) form a disordered region. Position 27 is a phosphoserine (serine 27). Basic and acidic residues predominate over residues 40–53 (LLKKSEKLLAELDR). Positions 93 to 104 (SSSGSSDSLGSG) are enriched in low complexity. GTP is bound by residues 121 to 128 (GESGVGKS), 229 to 232 (NKSD), and 260 to 261 (AA). Residues 283–308 (RNHAGGQRPDPGSPEGPAPPARRESL) are disordered. A compositionally biased stretch (pro residues) spans 293 to 302 (PGSPEGPAPP). Serine 295 is subject to Phosphoserine.

This sequence belongs to the small GTPase superfamily. RGK family.

Its subcellular location is the cell membrane. In terms of biological role, binds GTP saturably and exhibits a low intrinsic rate of GTP hydrolysis. This Homo sapiens (Human) protein is GTP-binding protein REM 2 (REM2).